The chain runs to 444 residues: Phosphoglucosamine mutase (444 aa).

Residue serine 101 is the Phosphoserine intermediate of the active site. Mg(2+) is bound by residues serine 101, aspartate 240, aspartate 242, and aspartate 244. Serine 101 bears the Phosphoserine mark.

This sequence belongs to the phosphohexose mutase family. Requires Mg(2+) as cofactor. Activated by phosphorylation.

The enzyme catalyses alpha-D-glucosamine 1-phosphate = D-glucosamine 6-phosphate. In terms of biological role, catalyzes the conversion of glucosamine-6-phosphate to glucosamine-1-phosphate. The protein is Phosphoglucosamine mutase of Sphingopyxis alaskensis (strain DSM 13593 / LMG 18877 / RB2256) (Sphingomonas alaskensis).